Consider the following 351-residue polypeptide: Protein MGF 360-2L (351 aa).

The protein belongs to the asfivirus MGF 360 family.

Functionally, plays a role in virus cell tropism, and may be required for efficient virus replication in macrophages. This African swine fever virus (isolate Tick/South Africa/Pretoriuskop Pr4/1996) (ASFV) protein is Protein MGF 360-2L.